The following is a 425-amino-acid chain: Serine--tRNA ligase (425 aa).

Residue 228-230 (TAE) coordinates L-serine. Residue 259 to 261 (RSE) participates in ATP binding. Glutamate 282 contributes to the L-serine binding site. 346–349 (EIAS) is a binding site for ATP. Residue serine 382 coordinates L-serine.

The protein belongs to the class-II aminoacyl-tRNA synthetase family. Type-1 seryl-tRNA synthetase subfamily. As to quaternary structure, homodimer. The tRNA molecule binds across the dimer.

The protein resides in the cytoplasm. It catalyses the reaction tRNA(Ser) + L-serine + ATP = L-seryl-tRNA(Ser) + AMP + diphosphate + H(+). It carries out the reaction tRNA(Sec) + L-serine + ATP = L-seryl-tRNA(Sec) + AMP + diphosphate + H(+). The protein operates within aminoacyl-tRNA biosynthesis; selenocysteinyl-tRNA(Sec) biosynthesis; L-seryl-tRNA(Sec) from L-serine and tRNA(Sec): step 1/1. Catalyzes the attachment of serine to tRNA(Ser). Is also able to aminoacylate tRNA(Sec) with serine, to form the misacylated tRNA L-seryl-tRNA(Sec), which will be further converted into selenocysteinyl-tRNA(Sec). The chain is Serine--tRNA ligase from Rickettsia prowazekii (strain Madrid E).